A 159-amino-acid polypeptide reads, in one-letter code: Ribosome maturation factor RimP (159 aa).

This sequence belongs to the RimP family.

The protein localises to the cytoplasm. In terms of biological role, required for maturation of 30S ribosomal subunits. In Streptococcus pneumoniae serotype 19F (strain G54), this protein is Ribosome maturation factor RimP.